A 485-amino-acid polypeptide reads, in one-letter code: Glutamyl-tRNA(Gln) amidotransferase subunit A (485 aa).

Residues Lys-78 and Ser-153 each act as charge relay system in the active site. Ser-177 (acyl-ester intermediate) is an active-site residue.

It belongs to the amidase family. GatA subfamily. Heterotrimer of A, B and C subunits.

It catalyses the reaction L-glutamyl-tRNA(Gln) + L-glutamine + ATP + H2O = L-glutaminyl-tRNA(Gln) + L-glutamate + ADP + phosphate + H(+). Its function is as follows. Allows the formation of correctly charged Gln-tRNA(Gln) through the transamidation of misacylated Glu-tRNA(Gln) in organisms which lack glutaminyl-tRNA synthetase. The reaction takes place in the presence of glutamine and ATP through an activated gamma-phospho-Glu-tRNA(Gln). The sequence is that of Glutamyl-tRNA(Gln) amidotransferase subunit A from Bacillus cytotoxicus (strain DSM 22905 / CIP 110041 / 391-98 / NVH 391-98).